The chain runs to 672 residues: 2,4-dienoyl-CoA reductase [(2E)-enoyl-CoA-producing] (672 aa).

FMN is bound by residues 25-27, glycine 59, and glutamine 101; that span reads SMH. Tyrosine 167 acts as the Proton donor in catalysis. Residue arginine 176 coordinates substrate. Arginine 215 is an FMN binding site. 253-256 contributes to the substrate binding site; the sequence is HEAR. Residues arginine 289 and 311-312 each bind FMN; that span reads AR. The [4Fe-4S] cluster site is built by cysteine 335 and cysteine 338. Glutamine 340 is a binding site for FAD. NADP(+) is bound at residue glutamine 340. Positions 342 and 354 each coordinate [4Fe-4S] cluster. Residues alanine 385, aspartate 404, glutamine 412, lysine 422, and valine 449 each coordinate FAD. Residue 563 to 564 coordinates NADP(+); the sequence is RK. Residues lysine 567 and tryptophan 578 each coordinate substrate. FAD is bound by residues glycine 649 and 656–658; that span reads LDA. 654 to 656 provides a ligand contact to NADP(+); the sequence is MEL.

This sequence in the N-terminal section; belongs to the NADH:flavin oxidoreductase/NADH oxidase family. In terms of assembly, monomer. The cofactor is FMN. FAD is required as a cofactor. Requires [4Fe-4S] cluster as cofactor.

The catalysed reaction is a 4,5-saturated-(2E)-enoyl-CoA + NADP(+) = a (2E,4E)-dienoyl-CoA + NADPH + H(+). The enzyme catalyses a (2E,4Z)-dienoyl-CoA + NADPH + H(+) = a 4,5-saturated-(2E)-enoyl-CoA + NADP(+). It catalyses the reaction (2E)-decenoyl-CoA + NADP(+) = (2E,4E)-decadienoyl-CoA + NADPH + H(+). It carries out the reaction (2E)-decenoyl-CoA + NADP(+) = (2E,4Z)-decadienoyl-CoA + NADPH + H(+). It participates in lipid metabolism; fatty acid beta-oxidation. Its activity is regulated as follows. Is non-competitively inhibited by NADH. In terms of biological role, functions as an auxiliary enzyme in the beta-oxidation of unsaturated fatty acids with double bonds at even carbon positions. Catalyzes the NADPH-dependent reduction of the C4-C5 double bond of the acyl chain of 2,4-dienoyl-CoA to yield 2-trans-enoyl-CoA. Acts on both isomers, 2-trans,4-cis- and 2-trans,4-trans-decadienoyl-CoA, with almost equal efficiency. Is not active with NADH instead of NADPH. Does not show cis-&gt;trans isomerase activity. The chain is 2,4-dienoyl-CoA reductase [(2E)-enoyl-CoA-producing] from Escherichia coli (strain K12).